The primary structure comprises 123 residues: Large ribosomal subunit protein uL14 (123 aa).

The protein belongs to the universal ribosomal protein uL14 family. As to quaternary structure, part of the 50S ribosomal subunit. Forms a cluster with proteins L3 and L19. In the 70S ribosome, L14 and L19 interact and together make contacts with the 16S rRNA in bridges B5 and B8.

Functionally, binds to 23S rRNA. Forms part of two intersubunit bridges in the 70S ribosome. The protein is Large ribosomal subunit protein uL14 of Pectobacterium atrosepticum (strain SCRI 1043 / ATCC BAA-672) (Erwinia carotovora subsp. atroseptica).